Consider the following 299-residue polypeptide: Bifunctional protein FolD (299 aa).

Residues Gly164 to Ser166 and Ile234 contribute to the NADP(+) site.

It belongs to the tetrahydrofolate dehydrogenase/cyclohydrolase family. In terms of assembly, homodimer.

It carries out the reaction (6R)-5,10-methylene-5,6,7,8-tetrahydrofolate + NADP(+) = (6R)-5,10-methenyltetrahydrofolate + NADPH. It catalyses the reaction (6R)-5,10-methenyltetrahydrofolate + H2O = (6R)-10-formyltetrahydrofolate + H(+). It participates in one-carbon metabolism; tetrahydrofolate interconversion. In terms of biological role, catalyzes the oxidation of 5,10-methylenetetrahydrofolate to 5,10-methenyltetrahydrofolate and then the hydrolysis of 5,10-methenyltetrahydrofolate to 10-formyltetrahydrofolate. In Christiangramia forsetii (strain DSM 17595 / CGMCC 1.15422 / KT0803) (Gramella forsetii), this protein is Bifunctional protein FolD.